A 300-amino-acid polypeptide reads, in one-letter code: ESX-5 secretion-associated protein EspG5 (300 aa).

It belongs to the EspG family. Interacts specifically with ESX-5-dependent PE/PPE proteins. Forms a 1:1:1 heterotrimeric complex with the PE25/PPE41 dimer, via PPE41. Binding of EspG5 does not cause conformational changes in the PE25/PPE41 dimer. Forms a 1:1:1 heterotrimeric complex with the PE8/PPE15 dimer, via PPE15.

It localises to the cytoplasm. Its function is as follows. Specific chaperone for cognate PE/PPE proteins. Plays an important role in preventing aggregation of PE/PPE dimers. The sequence is that of ESX-5 secretion-associated protein EspG5 from Mycobacterium tuberculosis (strain ATCC 25618 / H37Rv).